We begin with the raw amino-acid sequence, 741 residues long: Ion-translocating oxidoreductase complex subunit C (741 aa).

4Fe-4S ferredoxin-type domains follow at residues glycine 369–tyrosine 397 and lysine 407–phenylalanine 436. 8 residues coordinate [4Fe-4S] cluster: cysteine 377, cysteine 380, cysteine 383, cysteine 387, cysteine 416, cysteine 419, cysteine 422, and cysteine 426. The segment at isoleucine 627–alanine 654 is disordered.

This sequence belongs to the 4Fe4S bacterial-type ferredoxin family. RnfC subfamily. As to quaternary structure, the complex is composed of six subunits: RsxA, RsxB, RsxC, RsxD, RsxE and RsxG. It depends on [4Fe-4S] cluster as a cofactor.

Its subcellular location is the cell inner membrane. In terms of biological role, part of a membrane-bound complex that couples electron transfer with translocation of ions across the membrane. Required to maintain the reduced state of SoxR. This Escherichia coli O127:H6 (strain E2348/69 / EPEC) protein is Ion-translocating oxidoreductase complex subunit C.